A 596-amino-acid chain; its full sequence is Actin-histidine N-methyltransferase (596 aa).

Residues 1–22 (MGKKSRVKTQKSGTGATATVSP) are disordered. Polar residues predominate over residues 10-20 (QKSGTGATATV). Residues arginine 75, 104–106 (EGF), arginine 254, 275–279 (DMCNH), and 325–327 (SGF) each bind S-adenosyl-L-methionine. Residues 94–314 (EGFEMVNFKE…AGDQIYIFYG (221 aa)) enclose the SET domain. The disordered stretch occupies residues 551–596 (GLVNGESLIPNGTRSENESLSPEESENTTGDTEESSGSMDAVKERL). Residues 571–584 (SPEESENTTGDTEE) are compositionally biased toward acidic residues.

It belongs to the class V-like SAM-binding methyltransferase superfamily. SETD3 actin-histidine methyltransferase family. In terms of assembly, interacts with MYOD1. In terms of processing, phosphorylated by GSK3B, which is required for recognition by the SCF(FBXW7) complex and subsequent degradation. Ubiquitinated by the SCF(FBXW7) complex following phosphorylation by GSK3B, leading to its degradation by the proteasome.

It is found in the cytoplasm. The protein localises to the nucleus. It catalyses the reaction L-histidyl-[protein] + S-adenosyl-L-methionine = N(tele)-methyl-L-histidyl-[protein] + S-adenosyl-L-homocysteine + H(+). Functionally, protein-histidine N-methyltransferase that specifically mediates 3-methylhistidine (tele-methylhistidine) methylation of actin at 'His-73'. Histidine methylation of actin is required for smooth muscle contraction of the laboring uterus during delivery. Does not have protein-lysine N-methyltransferase activity and probably only catalyzes histidine methylation of actin. The sequence is that of Actin-histidine N-methyltransferase from Rattus norvegicus (Rat).